We begin with the raw amino-acid sequence, 185 residues long: Ribosome-recycling factor (185 aa).

It belongs to the RRF family.

It localises to the cytoplasm. Its function is as follows. Responsible for the release of ribosomes from messenger RNA at the termination of protein biosynthesis. May increase the efficiency of translation by recycling ribosomes from one round of translation to another. This chain is Ribosome-recycling factor, found in Pectobacterium carotovorum subsp. carotovorum (strain PC1).